The chain runs to 125 residues: MKDQGRSTRKRTGGRLHDVSKKKRHQLGREPAETTVDDPRFQVIDARGSDDKLRALSTNIAQVADSGEVTTEEIENVVDNPANVNYIRRNIITKGAIIETSAGQARVTSRPGQTGQVSAVLLEDS.

Residues 1–36 form a disordered region; that stretch reads MKDQGRSTRKRTGGRLHDVSKKKRHQLGREPAETTV. Positions 7–26 are enriched in basic residues; that stretch reads STRKRTGGRLHDVSKKKRHQ. Basic and acidic residues predominate over residues 27–36; it reads LGREPAETTV.

It belongs to the eukaryotic ribosomal protein eS8 family. In terms of assembly, part of the 30S ribosomal subunit.

The chain is Small ribosomal subunit protein eS8 from Haloquadratum walsbyi (strain DSM 16790 / HBSQ001).